Consider the following 310-residue polypeptide: uncharacterized protein (310 aa).

The next 9 helical transmembrane spans lie at 1–21 (MIYF…MFSK), 38–58 (FFFY…VVYT), 74–94 (TSYF…FFIF), 110–130 (YGLW…SFLF), 135–155 (WILY…IFFS), 194–214 (IFIT…IVFS), 228–248 (LFII…MYLF), 256–276 (FPIM…KILI), and 284–304 (IFLT…INLI).

This sequence belongs to the TerC family.

Its subcellular location is the cell membrane. This is an uncharacterized protein from Buchnera aphidicola subsp. Schizaphis graminum (strain Sg).